The following is a 58-amino-acid chain: Small ribosomal subunit protein bS21 (58 aa).

The segment at 34–58 (KREHYESPSVRRKKKSEAARRRKRR) is disordered. Basic residues predominate over residues 43–58 (VRRKKKSEAARRRKRR).

It belongs to the bacterial ribosomal protein bS21 family.

This chain is Small ribosomal subunit protein bS21, found in Caldicellulosiruptor bescii (strain ATCC BAA-1888 / DSM 6725 / KCTC 15123 / Z-1320) (Anaerocellum thermophilum).